The primary structure comprises 140 residues: ATP synthase epsilon chain (140 aa).

This sequence belongs to the ATPase epsilon chain family. In terms of assembly, F-type ATPases have 2 components, CF(1) - the catalytic core - and CF(0) - the membrane proton channel. CF(1) has five subunits: alpha(3), beta(3), gamma(1), delta(1), epsilon(1). CF(0) has three main subunits: a, b and c.

The protein localises to the cell inner membrane. Produces ATP from ADP in the presence of a proton gradient across the membrane. This is ATP synthase epsilon chain from Nitrosomonas europaea (strain ATCC 19718 / CIP 103999 / KCTC 2705 / NBRC 14298).